A 154-amino-acid chain; its full sequence is Large ribosomal subunit protein uL13 (154 aa).

The protein belongs to the universal ribosomal protein uL13 family. Part of the 50S ribosomal subunit.

This protein is one of the early assembly proteins of the 50S ribosomal subunit, although it is not seen to bind rRNA by itself. It is important during the early stages of 50S assembly. This Rhizobium rhizogenes (strain K84 / ATCC BAA-868) (Agrobacterium radiobacter) protein is Large ribosomal subunit protein uL13.